A 427-amino-acid polypeptide reads, in one-letter code: Enolase (427 aa).

Gln163 provides a ligand contact to (2R)-2-phosphoglycerate. Catalysis depends on Glu205, which acts as the Proton donor. Mg(2+) is bound by residues Asp242, Glu285, and Asp312. Residues Lys337, Arg366, Ser367, and Lys388 each coordinate (2R)-2-phosphoglycerate. The Proton acceptor role is filled by Lys337.

Belongs to the enolase family. Requires Mg(2+) as cofactor.

It is found in the cytoplasm. The protein localises to the secreted. The protein resides in the cell surface. The catalysed reaction is (2R)-2-phosphoglycerate = phosphoenolpyruvate + H2O. The protein operates within carbohydrate degradation; glycolysis; pyruvate from D-glyceraldehyde 3-phosphate: step 4/5. In terms of biological role, catalyzes the reversible conversion of 2-phosphoglycerate (2-PG) into phosphoenolpyruvate (PEP). It is essential for the degradation of carbohydrates via glycolysis. The protein is Enolase of Ralstonia nicotianae (strain ATCC BAA-1114 / GMI1000) (Ralstonia solanacearum).